We begin with the raw amino-acid sequence, 1029 residues long: Eukaryotic translation initiation factor 3 subunit A (1029 aa).

Positions 92–121 (LKKFIELAEQKVTEAQAKADEIQSSLESAA) form a coiled coil. The PCI domain occupies 339–523 (MTKAASFVLL…GVLTFESDIF (185 aa)). Residues 606-903 (TRRAIIEKRK…EEEAEQRRAA (298 aa)) adopt a coiled-coil conformation. Composition is skewed to basic and acidic residues over residues 621–632 (ALQKKQREEENR), 644–666 (EQQR…EQDR), 797–901 (TEKR…EQRR), and 913–924 (GPAREASPERTA). Disordered stretches follow at residues 621 to 666 (ALQK…EQDR) and 797 to 1029 (TEKR…KQQQ). Residues 943–960 (AKAAASAGEQPAAAQEAT) show a composition bias toward low complexity. Basic and acidic residues predominate over residues 977 to 993 (ATRDGPSDSRDLSHARE).

This sequence belongs to the eIF-3 subunit A family. As to quaternary structure, component of the eukaryotic translation initiation factor 3 (eIF-3) complex.

The protein localises to the cytoplasm. In terms of biological role, RNA-binding component of the eukaryotic translation initiation factor 3 (eIF-3) complex, which is involved in protein synthesis of a specialized repertoire of mRNAs and, together with other initiation factors, stimulates binding of mRNA and methionyl-tRNAi to the 40S ribosome. The eIF-3 complex specifically targets and initiates translation of a subset of mRNAs involved in cell proliferation. The chain is Eukaryotic translation initiation factor 3 subunit A from Coccidioides immitis (strain RS) (Valley fever fungus).